A 64-amino-acid chain; its full sequence is Large ribosomal subunit protein bL35 (64 aa).

The protein belongs to the bacterial ribosomal protein bL35 family.

In Vibrio atlanticus (strain LGP32) (Vibrio splendidus (strain Mel32)), this protein is Large ribosomal subunit protein bL35.